The following is a 470-amino-acid chain: tRNA-2-methylthio-N(6)-dimethylallyladenosine synthase (470 aa).

Positions 5 to 122 (RKLYVKSFGC…LPELLAEAKA (118 aa)) constitute an MTTase N-terminal domain. [4Fe-4S] cluster-binding residues include Cys-14, Cys-50, Cys-85, Cys-163, Cys-167, and Cys-170. The region spanning 149–383 (RSRGPAAFVT…LLEASKAAFD (235 aa)) is the Radical SAM core domain. A TRAM domain is found at 384–446 (ESCRGRTFDI…PNSLAGVPAE (63 aa)). The segment at 439-470 (SLAGVPAEASEPSVSQSPVSSARSRPLAAMEA) is disordered. Positions 444-464 (PAEASEPSVSQSPVSSARSRP) are enriched in low complexity.

The protein belongs to the methylthiotransferase family. MiaB subfamily. As to quaternary structure, monomer. The cofactor is [4Fe-4S] cluster.

It is found in the cytoplasm. The enzyme catalyses N(6)-dimethylallyladenosine(37) in tRNA + (sulfur carrier)-SH + AH2 + 2 S-adenosyl-L-methionine = 2-methylsulfanyl-N(6)-dimethylallyladenosine(37) in tRNA + (sulfur carrier)-H + 5'-deoxyadenosine + L-methionine + A + S-adenosyl-L-homocysteine + 2 H(+). Catalyzes the methylthiolation of N6-(dimethylallyl)adenosine (i(6)A), leading to the formation of 2-methylthio-N6-(dimethylallyl)adenosine (ms(2)i(6)A) at position 37 in tRNAs that read codons beginning with uridine. This is tRNA-2-methylthio-N(6)-dimethylallyladenosine synthase from Xanthobacter autotrophicus (strain ATCC BAA-1158 / Py2).